The primary structure comprises 266 residues: Large ribosomal subunit protein uL3 (266 aa).

Residues 124 to 149 form a disordered region; it reads NQKIGPKSHGGGGGSKPVRQTGSLGD.

This sequence belongs to the universal ribosomal protein uL3 family. As to quaternary structure, part of the 50S ribosomal subunit. Forms a cluster with proteins L14 and L19.

Functionally, one of the primary rRNA binding proteins, it binds directly near the 3'-end of the 23S rRNA, where it nucleates assembly of the 50S subunit. This is Large ribosomal subunit protein uL3 from Mycoplasmopsis pulmonis (strain UAB CTIP) (Mycoplasma pulmonis).